Here is a 266-residue protein sequence, read N- to C-terminus: Ribosomal RNA small subunit methyltransferase A (266 aa).

Residues Asn-10, Ile-12, Gly-37, Glu-58, Asp-82, and Asn-105 each contribute to the S-adenosyl-L-methionine site.

Belongs to the class I-like SAM-binding methyltransferase superfamily. rRNA adenine N(6)-methyltransferase family. RsmA subfamily.

The protein localises to the cytoplasm. The enzyme catalyses adenosine(1518)/adenosine(1519) in 16S rRNA + 4 S-adenosyl-L-methionine = N(6)-dimethyladenosine(1518)/N(6)-dimethyladenosine(1519) in 16S rRNA + 4 S-adenosyl-L-homocysteine + 4 H(+). Its function is as follows. Specifically dimethylates two adjacent adenosines (A1518 and A1519) in the loop of a conserved hairpin near the 3'-end of 16S rRNA in the 30S particle. May play a critical role in biogenesis of 30S subunits. The sequence is that of Ribosomal RNA small subunit methyltransferase A from Mycoplasma mycoides subsp. mycoides SC (strain CCUG 32753 / NCTC 10114 / PG1).